We begin with the raw amino-acid sequence, 428 residues long: Flotillin-2 (428 aa).

G2 is lipidated: N-myristoyl glycine. A lipid anchor (S-palmitoyl cysteine; by ZDHHC5) is attached at C4. The S-palmitoyl cysteine moiety is linked to residue C19. The S-palmitoyl cysteine; by ZDHHC5 moiety is linked to residue C20. S405 carries the post-translational modification Phosphoserine.

The protein belongs to the band 7/mec-2 family. Flotillin subfamily. As to quaternary structure, heterooligomeric complex of flotillin-1 and flotillin-2 and caveolin-1 and caveolin-2. Interacts with ECPAS. ZDHHC5-catalyzed palmitoylation predominantly occurs at Cys-4. ZDHHC5-catalyzed palmitoylation may be required for the formation of higher-order complexes and for neurite outgrowth in cultured neural stem cells. In terms of tissue distribution, in skin, expressed in epidermis and epidermal appendages but not in dermis. Expressed in all layers of the epidermis except the basal layer. In hair follicles, expressed in the suprabasal layer but not the basal layer. Also expressed in melanoma and carcinoma cell lines, fibroblasts and foreskin melanocytes.

The protein resides in the cell membrane. Its subcellular location is the membrane. The protein localises to the caveola. It is found in the endosome. Functionally, may act as a scaffolding protein within caveolar membranes, functionally participating in formation of caveolae or caveolae-like vesicles. May be involved in epidermal cell adhesion and epidermal structure and function. This Homo sapiens (Human) protein is Flotillin-2 (FLOT2).